The chain runs to 147 residues: Large ribosomal subunit protein uL13 (147 aa).

Belongs to the universal ribosomal protein uL13 family. Part of the 50S ribosomal subunit.

Functionally, this protein is one of the early assembly proteins of the 50S ribosomal subunit, although it is not seen to bind rRNA by itself. It is important during the early stages of 50S assembly. The sequence is that of Large ribosomal subunit protein uL13 from Corynebacterium diphtheriae (strain ATCC 700971 / NCTC 13129 / Biotype gravis).